A 303-amino-acid chain; its full sequence is Thyrotroph embryonic factor (303 aa).

2 disordered regions span residues 1-63 and 132-176; these read MSDA…KLEE and ESAS…DPNC. Position 32 is a phosphoserine (Ser32). The span at 41 to 61 shows a compositional bias: basic and acidic residues; that stretch reads KLMENPPREARLDKEKGKEKL. Residues 133–160 are compositionally biased toward low complexity; it reads SASSSTASPPSSSTAIFQPSETVSSTES. One can recognise a bZIP domain in the interval 233 to 296; sequence DEKYWTRRKK…GKCKTIVSKY (64 aa). The segment at 235–255 is basic motif; it reads KYWTRRKKNNVAAKRSRDARR. A leucine-zipper region spans residues 256–263; sequence LKENQITI.

Belongs to the bZIP family. PAR subfamily. Binds DNA as a homodimer or a heterodimer. Can form a heterodimer with DBP.

The protein localises to the nucleus. Transcription factor that binds to and transactivates the TSHB promoter. Binds to a minimal DNA-binding sequence 5'-[TC][AG][AG]TTA[TC][AG]-3'. This chain is Thyrotroph embryonic factor (TEF), found in Homo sapiens (Human).